A 145-amino-acid polypeptide reads, in one-letter code: D-aminoacyl-tRNA deacylase (145 aa).

Positions 137–138 match the Gly-cisPro motif, important for rejection of L-amino acids motif; that stretch reads GP.

Belongs to the DTD family. In terms of assembly, homodimer.

The protein resides in the cytoplasm. The catalysed reaction is glycyl-tRNA(Ala) + H2O = tRNA(Ala) + glycine + H(+). It catalyses the reaction a D-aminoacyl-tRNA + H2O = a tRNA + a D-alpha-amino acid + H(+). Its function is as follows. An aminoacyl-tRNA editing enzyme that deacylates mischarged D-aminoacyl-tRNAs. Also deacylates mischarged glycyl-tRNA(Ala), protecting cells against glycine mischarging by AlaRS. Acts via tRNA-based rather than protein-based catalysis; rejects L-amino acids rather than detecting D-amino acids in the active site. By recycling D-aminoacyl-tRNA to D-amino acids and free tRNA molecules, this enzyme counteracts the toxicity associated with the formation of D-aminoacyl-tRNA entities in vivo and helps enforce protein L-homochirality. This Cereibacter sphaeroides (strain ATCC 17029 / ATH 2.4.9) (Rhodobacter sphaeroides) protein is D-aminoacyl-tRNA deacylase.